The sequence spans 201 residues: Small ribosomal subunit protein uS4c (201 aa).

The disordered stretch occupies residues 15–43 (LGALPGLTSKRPTPGSDLRNQSRSGKRSQ). The 61-residue stretch at 89–149 (MRLDNILFRL…DEQKSRALIQ (61 aa)) folds into the S4 RNA-binding domain.

Belongs to the universal ribosomal protein uS4 family. In terms of assembly, part of the 30S ribosomal subunit. Contacts protein S5. The interaction surface between S4 and S5 is involved in control of translational fidelity.

It localises to the plastid. Its subcellular location is the chloroplast. In terms of biological role, one of the primary rRNA binding proteins, it binds directly to 16S rRNA where it nucleates assembly of the body of the 30S subunit. Functionally, with S5 and S12 plays an important role in translational accuracy. The chain is Small ribosomal subunit protein uS4c (rps4) from Nandina domestica (Heavenly bamboo).